A 339-amino-acid chain; its full sequence is Alpha-ketoglutarate-dependent dioxygenase btcD (339 aa).

H96 contacts substrate. Fe cation is bound by residues H140 and D142. Position 173 (T173) interacts with 2-oxoglutarate. A disordered region spans residues 207–230 (DGSDPKFQVPRGSPANVGTNLRPT). H302 is a binding site for Fe cation. 2 residues coordinate 2-oxoglutarate: R314 and R318. Substrate is bound at residue R318.

This sequence belongs to the TfdA dioxygenase family. Fe(2+) serves as cofactor.

It participates in secondary metabolite biosynthesis; terpenoid biosynthesis. Functionally, alpha-ketoglutarate-dependent dioxygenase; part of the gene cluster that mediates the biosynthesis of betaestacins. The bifunctional terpene synthase btcA converts isopentenyl diphosphate (IPP) and dimethylallyl diphosphate (DMAPP) into the sesterterpene betaestacin I. The C-terminal prenyltransferase (PT) domain of btcA catalyzes formation of GFPP, whereas the N-terminal terpene cyclase (TC) domain catalyzes the cyclization of GFPP into betaestacin I. The cytochrome P450 monooxygenase btcB is then responsible for the six-step oxidation of betaestacin I to yield betaestacin II. The roles of the cytochrome P450 monooxygenase btcC and the alpha-ketoglutarate-dependent dioxygenase btcD have not been identified yet. The sequence is that of Alpha-ketoglutarate-dependent dioxygenase btcD from Neocamarosporium betae (Beet black rot fungus).